Reading from the N-terminus, the 125-residue chain is Fluoride-specific ion channel FluC (125 aa).

The next 4 membrane-spanning stretches (helical) occupy residues 2–22, 35–55, 68–88, and 98–118; these read WLSI…RTGF, LGTL…LAFF, LIIT…AEVV, and WALG…LLGI. Na(+) is bound by residues glycine 75 and threonine 78.

The protein belongs to the fluoride channel Fluc/FEX (TC 1.A.43) family.

It is found in the cell inner membrane. It carries out the reaction fluoride(in) = fluoride(out). Its activity is regulated as follows. Na(+) is not transported, but it plays an essential structural role and its presence is essential for fluoride channel function. Fluoride-specific ion channel. Important for reducing fluoride concentration in the cell, thus reducing its toxicity. In Polynucleobacter asymbioticus (strain DSM 18221 / CIP 109841 / QLW-P1DMWA-1) (Polynucleobacter necessarius subsp. asymbioticus), this protein is Fluoride-specific ion channel FluC.